The chain runs to 283 residues: Polyamine aminopropyltransferase (283 aa).

A PABS domain is found at 5-238; it reads TTWIDEYQKG…GIWSWTFASK (234 aa). Gln32 lines the S-methyl-5'-thioadenosine pocket. Spermidine contacts are provided by His63 and Asp87. S-methyl-5'-thioadenosine is bound by residues Glu107 and 139-140; that span reads DG. The active-site Proton acceptor is Asp158. 158-161 provides a ligand contact to spermidine; it reads DCSD.

The protein belongs to the spermidine/spermine synthase family. Homodimer or homotetramer.

It is found in the cytoplasm. It catalyses the reaction S-adenosyl 3-(methylsulfanyl)propylamine + putrescine = S-methyl-5'-thioadenosine + spermidine + H(+). Its pathway is amine and polyamine biosynthesis; spermidine biosynthesis; spermidine from putrescine: step 1/1. Catalyzes the irreversible transfer of a propylamine group from the amino donor S-adenosylmethioninamine (decarboxy-AdoMet) to putrescine (1,4-diaminobutane) to yield spermidine. The chain is Polyamine aminopropyltransferase from Prochlorococcus marinus (strain MIT 9515).